Reading from the N-terminus, the 352-residue chain is Hematopoietic SH2 domain-containing protein (352 aa).

Residues 34–125 (WFHGAISRED…PRRELLTQPC (92 aa)) enclose the SH2 domain. 2 disordered regions span residues 157-199 (EEAS…LGET) and 241-352 (VISG…PGYC). The segment covering 180 to 191 (RITTKEATSSCP) has biased composition (polar residues). A compositionally biased stretch (basic and acidic residues) spans 283–295 (PKDRKVPTRKAER). The segment covering 343-352 (QPPPFAPGYC) has biased composition (pro residues).

As to quaternary structure, interacts with FES and TNK2. Post-translationally, may be phosphorylated by FES and ACK1. In terms of tissue distribution, predominantly expressed in spleen and hematopoietic cells such as peripheral blood leukocytes and weakly expressed in prostate, thymus, heart, small intestine and placenta.

It localises to the cytoplasm. It is found in the nucleus. Its function is as follows. May be a modulator of the apoptotic response through its ability to affect mitochondrial stability. Adapter protein involved in tyrosine kinase and CD28 signaling. Seems to affect CD28-mediated activation of the RE/AP element of the interleukin-2 promoter. This chain is Hematopoietic SH2 domain-containing protein (HSH2D), found in Homo sapiens (Human).